The chain runs to 375 residues: Protein RIC-3 (375 aa).

The first 29 residues, 1 to 29 (MALSAVQKVVLFSCLVLCVSLLLPRAYIA), serve as a signal peptide directing secretion. Residues 30 to 90 (RGKPAAQEGN…GGGGGTRPSL (61 aa)) are Lumenal-facing. The span at 38-47 (GNTGLFQSSG) shows a compositional bias: polar residues. The interval 38–63 (GNTGLFQSSGHHPKPTDGRPGGAHFP) is disordered. Residues 91–111 (VGQIIPIYGFGILLYILYILF) form a helical membrane-spanning segment. At 112-375 (KLSSKGKSTK…RKRNTKGIEY (264 aa)) the chain is on the cytoplasmic side. A coiled-coil region spans residues 135 to 165 (KRKITDYELSQLQDKLKETEEAMEKIISRLG). A disordered region spans residues 251-375 (SAEQVAEQMG…RKRNTKGIEY (125 aa)). Polar residues predominate over residues 286–296 (GDQQAQGTISA). The segment covering 305–319 (EDIEEDEDEDEDPEV) has biased composition (acidic residues). Over residues 365 to 375 (LRKRNTKGIEY) the composition is skewed to basic residues.

This sequence belongs to the ric-3 family.

The protein resides in the endoplasmic reticulum membrane. In terms of biological role, molecular chaperone which facilitates proper subunit assembly andsurface trafficking of alpha-7 (CHRNA7) and alpha-8 (CHRNA8) nicotinic acetylcholine receptors. May also promote functional expression of homomeric serotoninergic 5-HT3 receptors, and of heteromeric acetylcholine receptors. The protein is Protein RIC-3 (ric3) of Xenopus tropicalis (Western clawed frog).